We begin with the raw amino-acid sequence, 646 residues long: 1-deoxy-D-xylulose-5-phosphate synthase (646 aa).

Residues H86 and 127–129 each bind thiamine diphosphate; that span reads AHS. D158 is a Mg(2+) binding site. Thiamine diphosphate contacts are provided by residues 159 to 160, N188, Y295, and E377; that span reads GA. N188 is a binding site for Mg(2+).

Belongs to the transketolase family. DXPS subfamily. As to quaternary structure, homodimer. It depends on Mg(2+) as a cofactor. Requires thiamine diphosphate as cofactor.

The catalysed reaction is D-glyceraldehyde 3-phosphate + pyruvate + H(+) = 1-deoxy-D-xylulose 5-phosphate + CO2. It participates in metabolic intermediate biosynthesis; 1-deoxy-D-xylulose 5-phosphate biosynthesis; 1-deoxy-D-xylulose 5-phosphate from D-glyceraldehyde 3-phosphate and pyruvate: step 1/1. Its function is as follows. Catalyzes the acyloin condensation reaction between C atoms 2 and 3 of pyruvate and glyceraldehyde 3-phosphate to yield 1-deoxy-D-xylulose-5-phosphate (DXP). This Burkholderia cenocepacia (strain HI2424) protein is 1-deoxy-D-xylulose-5-phosphate synthase.